Reading from the N-terminus, the 464-residue chain is tRNA modification GTPase MnmE (464 aa).

Arginine 27, glutamate 90, and lysine 129 together coordinate (6S)-5-formyl-5,6,7,8-tetrahydrofolate. Residues 222 to 384 (GITLVLAGSV…LYDKIRTLIS (163 aa)) enclose the TrmE-type G domain. GTP is bound by residues 232–237 (NAGKSS), 251–257 (SSYPGTT), and 276–279 (DTAG). Serine 236 and threonine 257 together coordinate Mg(2+). Residue lysine 464 coordinates (6S)-5-formyl-5,6,7,8-tetrahydrofolate.

It belongs to the TRAFAC class TrmE-Era-EngA-EngB-Septin-like GTPase superfamily. TrmE GTPase family. Homodimer. Heterotetramer of two MnmE and two MnmG subunits. Requires K(+) as cofactor.

Its subcellular location is the cytoplasm. Exhibits a very high intrinsic GTPase hydrolysis rate. Involved in the addition of a carboxymethylaminomethyl (cmnm) group at the wobble position (U34) of certain tRNAs, forming tRNA-cmnm(5)s(2)U34. The chain is tRNA modification GTPase MnmE from Borreliella afzelii (strain PKo) (Borrelia afzelii).